We begin with the raw amino-acid sequence, 398 residues long: Phosphoglycerate kinase (398 aa).

Substrate is bound by residues Asp23–Asn25, Arg38, His61–Lys64, Arg122, and Arg155. Residues Lys206, Gly297, Glu328, and Gly354–Ser357 each bind ATP.

The protein belongs to the phosphoglycerate kinase family. In terms of assembly, monomer.

Its subcellular location is the cytoplasm. It catalyses the reaction (2R)-3-phosphoglycerate + ATP = (2R)-3-phospho-glyceroyl phosphate + ADP. It participates in carbohydrate degradation; glycolysis; pyruvate from D-glyceraldehyde 3-phosphate: step 2/5. The sequence is that of Phosphoglycerate kinase from Clostridium botulinum (strain Hall / ATCC 3502 / NCTC 13319 / Type A).